Here is a 436-residue protein sequence, read N- to C-terminus: Xylose isomerase (436 aa).

Active-site residues include H100 and D103. Positions 231, 267, 270, 295, 306, 308, and 338 each coordinate Mg(2+).

It belongs to the xylose isomerase family. As to quaternary structure, homotetramer. It depends on Mg(2+) as a cofactor.

It localises to the cytoplasm. It carries out the reaction alpha-D-xylose = alpha-D-xylulofuranose. The protein is Xylose isomerase of Rhizobium etli (strain ATCC 51251 / DSM 11541 / JCM 21823 / NBRC 15573 / CFN 42).